Consider the following 215-residue polypeptide: HTH-type transcriptional regulator for conjugative element R391 (215 aa).

One can recognise an HTH cro/C1-type domain in the interval 8–61; sequence LNHALQLTGVTQSELARRIGIKQQSISQICSGKSARSRYTMQIAEALRVNAHWL. A DNA-binding region (H-T-H motif) is located at residues 19–38; it reads QSELARRIGIKQQSISQICS.

In terms of biological role, may control the expression of the integrase and inhibit excision of the mobile element R391, and regulate the expression of other genes as well. This chain is HTH-type transcriptional regulator for conjugative element R391, found in Providencia rettgeri.